Reading from the N-terminus, the 233-residue chain is Methyltransferase srdJ (233 aa).

A disordered region spans residues 1–32 (MFQVQTAGTRTGTSSPDTTTSEAGLGSTPPMP). Low complexity predominate over residues 9-21 (TRTGTSSPDTTTS). Trp-40, Trp-52, and Gly-81 together coordinate S-adenosyl-L-methionine. The Required for methyltransferase activity motif lies at 140 to 146 (EISSQKY).

This sequence belongs to the methyltransferase superfamily.

Methyltransferase; part of the gene cluster that mediates the biosynthesis of sordarial, a salicylic aldehyde structurally related to the phytotoxin pyriculol. The most interesting aspect of this pathway is formation of an aromatic product from the highly reducing polyketide synthase srdA. SrdA synthesizes a reduced polyketide chain from one molecule of acetyl-CoA and five molecules of malonyl-CoA. The polyketide chain is then reductively released as an aldehyde. The oxidoreductases srdC, srdD and srdE then oxidize one of the hydroxy groups to facilitate the intramolecular aldol condensation, followed by dehydration to yield a salicylic aldehyde. This aldehyde can undergo facile reduction by endogenous reductases to yield the alcohol 1-hydroxy-2-hydroxymethyl-3-pent-1,3-dienylbenzene. The flavin-dependent srdI counteract against the propensity of the aldehydes to be reduced under physiological conditions and is responsible for reoxidizing 1-hydroxy-2-hydroxymethyl-3-pent-1,3-dienylbenzene back to the salicylic aldehyde. This salicylic aldehyde is then selectively epoxidized by the cupin-domain-containing oxidoreductase srdB to yield the epoxide, which can be hydrolyzed stereoselectively by the hydrolase srdG to give the final product sordarial. The protein is Methyltransferase srdJ of Neurospora crassa (strain ATCC 24698 / 74-OR23-1A / CBS 708.71 / DSM 1257 / FGSC 987).